Here is a 574-residue protein sequence, read N- to C-terminus: DNA mismatch repair protein MutL (574 aa).

It belongs to the DNA mismatch repair MutL/HexB family.

This protein is involved in the repair of mismatches in DNA. It is required for dam-dependent methyl-directed DNA mismatch repair. May act as a 'molecular matchmaker', a protein that promotes the formation of a stable complex between two or more DNA-binding proteins in an ATP-dependent manner without itself being part of a final effector complex. This is DNA mismatch repair protein MutL from Coxiella burnetii (strain RSA 331 / Henzerling II).